Reading from the N-terminus, the 957-residue chain is Collagen alpha-1(XXI) chain (957 aa).

The N-terminal stretch at 1–22 (MAHYITFLCMVLVLLLQNSVLA) is a signal peptide. In terms of domain architecture, VWFA spans 37–211 (DLVFILDGSY…KIREVMKQKL (175 aa)). A glycan (N-linked (GlcNAc...) asparagine) is linked at asparagine 62. The Laminin G-like domain occupies 230–412 (GFDILLGLDV…VQKLRIYCDP (183 aa)). Collagen-like domains are found at residues 448 to 500 (PGKP…GARG), 501 to 542 (LPGY…GDKG), and 543 to 594 (SPGF…SPGA). 2 disordered regions span residues 448-786 (PGKP…KPGR) and 825-938 (GSPG…ICDP). Low complexity-rich tracts occupy residues 451-462 (PGLQGPKGDPGL) and 471-481 (QPGQDGKPGYQ). Over residues 507–517 (EPGRDGDKGDR) the composition is skewed to basic and acidic residues. Low complexity-rich tracts occupy residues 618–637 (QKGE…PGMP) and 705–729 (EKGI…IQGH). Collagen-like domains are found at residues 681-733 (SPGE…HGAK), 734-787 (GERG…PGRE), 825-882 (GSPG…GSQG), and 884-934 (GYPG…GPPG). The segment covering 732–742 (AKGERGEKGEP) has biased composition (basic and acidic residues). Residues 829-838 (IPGPPGPIGP) are compositionally biased toward pro residues. Over residues 839–874 (EGPRGLPGLPGRDGVPGLVGVPGRPGVRGLKGLPGR) the composition is skewed to low complexity. Positions 889 to 900 (QGPPGPPGPEGP) are enriched in pro residues.

The protein belongs to the fibril-associated collagens with interrupted helices (FACIT) family. Highly expressed in lymph node, jejunum, pancreas, stomach, trachea, testis, uterus and placenta; moderately expressed in brain, colon, lung, prostate, spinal cord, salivary gland and vascular smooth-muscle cells and very weakly expressed in heart, liver, kidney, bone marrow, spleen, thymus, skeletal muscle, adrenal gland and peripheral leukocytes. Expression in heart was higher in the right ventricle and atrium than in the left ventricle and atrium.

It is found in the secreted. It localises to the extracellular space. Its subcellular location is the extracellular matrix. The protein resides in the cytoplasm. This Homo sapiens (Human) protein is Collagen alpha-1(XXI) chain (COL21A1).